The chain runs to 612 residues: Alpha-glycerophosphate oxidase (612 aa).

21 to 49 serves as a coordination point for FAD; that stretch reads DLLIIGGGITGAGVALQAAASGLDTGLIE. Basic and acidic residues predominate over residues 399–408; that stretch reads ETSTSEKELD. The segment at 399 to 418 is disordered; that stretch reads ETSTSEKELDPSAVSRGSSF.

It belongs to the FAD-dependent glycerol-3-phosphate dehydrogenase family. FAD serves as cofactor.

It is found in the cytoplasm. It catalyses the reaction sn-glycerol 3-phosphate + O2 = dihydroxyacetone phosphate + H2O2. In Streptococcus pyogenes serotype M1, this protein is Alpha-glycerophosphate oxidase (glpO).